Reading from the N-terminus, the 82-residue chain is UPF0291 protein LVIS_1359 (82 aa).

This sequence belongs to the UPF0291 family.

The protein resides in the cytoplasm. This is UPF0291 protein LVIS_1359 from Levilactobacillus brevis (strain ATCC 367 / BCRC 12310 / CIP 105137 / JCM 1170 / LMG 11437 / NCIMB 947 / NCTC 947) (Lactobacillus brevis).